A 237-amino-acid chain; its full sequence is Uridylate kinase (237 aa).

9 to 12 (KLSG) provides a ligand contact to ATP. Gly-51 provides a ligand contact to UMP. ATP is bound by residues Gly-52 and Arg-56. UMP is bound by residues Asp-71 and 132–139 (CGNPFFTT). Residues Thr-159, Tyr-165, and Asp-168 each contribute to the ATP site.

It belongs to the UMP kinase family. Homohexamer.

It localises to the cytoplasm. The enzyme catalyses UMP + ATP = UDP + ADP. It participates in pyrimidine metabolism; CTP biosynthesis via de novo pathway; UDP from UMP (UMPK route): step 1/1. Its activity is regulated as follows. Inhibited by UTP. Catalyzes the reversible phosphorylation of UMP to UDP. The chain is Uridylate kinase from Prochlorococcus marinus (strain MIT 9313).